The chain runs to 523 residues: Polyamine aminopropyltransferase (523 aa).

The next 7 membrane-spanning stretches (helical) occupy residues 20–40, 51–71, 88–108, 116–136, 164–184, 186–206, and 215–235; these read VLLA…LALL, IVAT…GALL, AVLG…FAFL, LVLA…VPLL, LGAL…LGMI, GAAV…IFLL, and LVTA…LLVH. The interval 203–478 is spermidine synthase; it reads IFLLRHVVSG…APTPAVPSTA (276 aa). Residues 231–465 form the PABS domain; it reads TLLVHSHDIE…GDWGFALARL (235 aa). Q261 contributes to the S-methyl-5'-thioadenosine binding site. A spermidine-binding site is contributed by D313. Residues E333 and 365–366 contribute to the S-methyl-5'-thioadenosine site; that span reads DA. The active-site Proton acceptor is D386.

Belongs to the spermidine/spermine synthase family. In terms of assembly, homodimer or homotetramer.

Its subcellular location is the cell membrane. It carries out the reaction S-adenosyl 3-(methylsulfanyl)propylamine + putrescine = S-methyl-5'-thioadenosine + spermidine + H(+). The protein operates within amine and polyamine biosynthesis; spermidine biosynthesis; spermidine from putrescine: step 1/1. In terms of biological role, catalyzes the irreversible transfer of a propylamine group from the amino donor S-adenosylmethioninamine (decarboxy-AdoMet) to putrescine (1,4-diaminobutane) to yield spermidine. The sequence is that of Polyamine aminopropyltransferase from Mycobacterium bovis (strain ATCC BAA-935 / AF2122/97).